A 341-amino-acid chain; its full sequence is BZIP domain-containing transcription factor BZP4 (341 aa).

Composition is skewed to polar residues over residues 1–32, 61–76, 128–139, and 150–163; these read MESS…PTNE, LTES…SHSL, PLTSHSRSQITH, and YSSS…SPVS. 2 disordered regions span residues 1–95 and 118–254; these read MESS…PHGM and TNHS…DKKQ. Low complexity predominate over residues 178 to 192; the sequence is SPSSSSFPSSIPRTP. Composition is skewed to basic and acidic residues over residues 225 to 234 and 242 to 254; these read TGDRKHEKDS and EEYK…DKKQ. The segment at 250–269 is basic motif; it reads KDKKQVRNRIGARRFRAKRK. The 59-residue stretch at 250 to 308 folds into the bZIP domain; it reads KDKKQVRNRIGARRFRAKRKDYVNQLEAGIRLRDDEITNLQSQLESQRNEINELRLQLK. Residues 279–307 form a leucine-zipper region; it reads IRLRDDEITNLQSQLESQRNEINELRLQL.

The protein belongs to the bZIP family.

Its subcellular location is the nucleus. The protein resides in the cytoplasm. Functionally, transcription factor that promotes the production of melanin, a pigment that serves as antioxidant, reactive oxygen species (ROS) scavenger and that protect fungal pathogens from radiation and host immune responses. This is BZIP domain-containing transcription factor BZP4 from Cryptococcus neoformans var. grubii serotype A (strain H99 / ATCC 208821 / CBS 10515 / FGSC 9487) (Filobasidiella neoformans var. grubii).